Reading from the N-terminus, the 410-residue chain is Acyl-CoA-binding domain-containing protein 5-B (410 aa).

Positions 12–101 (AQKRFEAAVK…IQLIIETLPV (90 aa)) constitute an ACB domain. Residues 23-32 (IRSLPEDGSY), 43-47 (YSYYK), lysine 69, and tyrosine 88 contribute to the an acyl-CoA site. Residues 119 to 128 (VEDDDDDDDE) are compositionally biased toward acidic residues. Disordered regions lie at residues 119–165 (VEDD…LDDY), 221–242 (SDDE…GSGV), and 254–320 (GANM…DRMD). The stretch at 326–355 (TQITTILSELEDNMQDVLRRLTTLEQLTAS) forms a coiled coil. The hydrophobic stretch at 382–404 (SPFTAVLTVLWPFAVHWLVQFYL) threads the membrane.

The protein resides in the membrane. Functionally, binds medium- and long-chain acyl-CoA esters. This Danio rerio (Zebrafish) protein is Acyl-CoA-binding domain-containing protein 5-B (acbd5b).